The sequence spans 354 residues: Protein NDH-DEPENDENT CYCLIC ELECTRON FLOW 5 (354 aa).

The transit peptide at 1 to 49 (MALVHYMNVSRSTFPLSRSSKINLSSSFASLPLQFHKNIKRLESSVPPS) directs the protein to the chloroplast.

The protein localises to the plastid. It localises to the chloroplast thylakoid membrane. Its function is as follows. Required for both formation and activity of the chloroplast NAD(P)H dehydrogenase (NDH) complex of the photosynthetic electron transport chain. May function in assembly or stabilization of the NDH complex. The protein is Protein NDH-DEPENDENT CYCLIC ELECTRON FLOW 5 of Arabidopsis thaliana (Mouse-ear cress).